The sequence spans 366 residues: Peroxisomal (S)-2-hydroxy-acid oxidase GLO4 (366 aa).

Residues 1-360 (MEDNLPVNVR…TRSHVMTEGD (360 aa)) form the FMN hydroxy acid dehydrogenase domain. Tyr-27 is an a 2-oxocarboxylate binding site. FMN is bound by residues 80-82 (PTG), Ser-109, 130-132 (QLY), and Thr-158. Tyr-132 lines the a 2-oxocarboxylate pocket. An a 2-oxocarboxylate-binding site is contributed by Arg-167. 2 residues coordinate FMN: Lys-231 and Ser-253. Catalysis depends on His-255, which acts as the Proton acceptor. Residue Arg-258 coordinates a 2-oxocarboxylate. FMN contacts are provided by residues 286-290 (DGGIR) and 309-310 (XX). The Microbody targeting signal signature appears at 364-366 (SLL).

This sequence belongs to the FMN-dependent alpha-hydroxy acid dehydrogenase family. Homotetramer. FMN serves as cofactor.

It localises to the peroxisome. It carries out the reaction a (2S)-2-hydroxycarboxylate + O2 = a 2-oxocarboxylate + H2O2. It participates in lipid metabolism; fatty acid metabolism. Its function is as follows. Oxidase that catalyzes the oxidation of a broad range of 2-hydroxyacids to the corresponding 2-oxoacids, with a reduction of O2 to H2O2. May be involved in a general medium- and long-chain fatty acid catabolic pathway such as alpha-oxidation. The protein is Peroxisomal (S)-2-hydroxy-acid oxidase GLO4 (GLO4) of Oryza sativa subsp. indica (Rice).